The chain runs to 92 residues: YcgL domain-containing protein Shewmr7_2249 (92 aa).

The 85-residue stretch at 1-85 folds into the YcgL domain; it reads MLCAVYKSSR…PQVNLLAEHR (85 aa).

The sequence is that of YcgL domain-containing protein Shewmr7_2249 from Shewanella sp. (strain MR-7).